Here is a 1219-residue protein sequence, read N- to C-terminus: Pleckstrin homology domain-containing family G member 3 (1219 aa).

Polar residues predominate over residues 1–10; the sequence is MPVSTSLHQD. The segment at 1 to 66 is disordered; the sequence is MPVSTSLHQD…HLPNSNNNSS (66 aa). Over residues 18-46 the composition is skewed to low complexity; that stretch reads SLTSTTSSSGSSCDSRSAMEEPSSSEAPA. Ser76 is modified (phosphoserine). The 180-residue stretch at 93 to 272 folds into the DH domain; the sequence is YLGRVVREIV…TCVAWYINDM (180 aa). The PH domain maps to 296 to 394; sequence DLTTYGELVL…WTHHIKRLIL (99 aa). The span at 431–442 shows a compositional bias: polar residues; sequence WSSQDEVSTNVR. Disordered stretches follow at residues 431–599 and 613–708; these read WSSQ…PSVL and FSRR…KESA. A Phosphoserine modification is found at Ser433. Over residues 446–463 the composition is skewed to basic and acidic residues; sequence RQSEPTKHLLRQLNEKAR. A phosphoserine mark is found at Ser576, Ser577, Ser618, Ser631, Ser640, Ser643, and Ser647. Low complexity predominate over residues 630 to 645; the sequence is GSPRLVSRSSSVLSLE. The span at 696–708 shows a compositional bias: basic and acidic residues; it reads EPDRSSCKKKESA. Phosphoserine is present on residues Ser741, Ser779, and Ser827. Disordered regions lie at residues 756-780, 821-840, 859-878, 955-1133, and 1146-1207; these read RFNS…VGSR, MESS…ANGF, EESA…RSPA, APER…LYVT, and VMEK…RVRN. A compositionally biased stretch (gly residues) spans 826–836; that stretch reads GSPGKGPGQGQ. A compositionally biased stretch (low complexity) spans 859–873; that stretch reads EESATASPESSSPTE. A phosphoserine mark is found at Ser962, Ser1011, Ser1023, Ser1037, and Ser1040. Polar residues predominate over residues 1020 to 1029; the sequence is SAVSQRTTSP. Residues 1049–1065 are compositionally biased toward basic and acidic residues; the sequence is DVRELCSKYASRDEARR. Ser1081 is modified (phosphoserine). An Omega-N-methylarginine modification is found at Arg1107. Residues 1187 to 1197 show a composition bias toward basic and acidic residues; sequence QPKEEGSRDPA.

The protein localises to the cytoplasm. Its subcellular location is the cytoskeleton. In terms of biological role, plays a role in controlling cell polarity and cell motility by selectively binding newly polymerized actin and activating RAC1 and CDC42 to enhance local actin polymerization. The chain is Pleckstrin homology domain-containing family G member 3 from Homo sapiens (Human).